A 94-amino-acid polypeptide reads, in one-letter code: UPF0768 protein YBL029C-A (94 aa).

This sequence belongs to the UPF0768 family.

Its subcellular location is the cell membrane. In Saccharomyces cerevisiae (strain ATCC 204508 / S288c) (Baker's yeast), this protein is UPF0768 protein YBL029C-A.